A 501-amino-acid chain; its full sequence is MEAASTWALLLALLLLLLLLSLTLFRTPARGYLPPGPTPLPLLGNLLQLRPGALYSGLLRLSKKYGPVFTVYLGPWRRVVVLVGHDAVREALGGQAEEFSGRGTLATLDKTFDGHGVFFANGERWKQLRKFTLLALRDLGMGKREGEELIQAEVQSLVEAFQKTEGRPFNPSMLLAQATSNVVCSLVFGIRLPYDDKEFQAVIQAASGTLLGISSPWGQAYEMFSWLLQPLPGPHTQLQHHLGTLAAFTIQQVQKHQGRFQTSGPARDVVDAFLLKMAQEKQDPGTEFTEKNLLMTVTYLLFAGTMTIGATIRYALLLLLRYPQVQQRVREELIQELGPGRAPSLSDRVRLPYTDAVLHEAQRLLALVPMGMPHTITRTTCFRGYTLPKGTEVFPLIGSILHDPAVFQNPGEFHPGRFLDEDGRLRKHEAFLPYSLGKRVCLGEGLARAELWLFFTSILQAFSLETPCPPGDLSLKPAISGLFNIPPDFQLRVWPTGDQSR.

Cys441 serves as a coordination point for heme.

This sequence belongs to the cytochrome P450 family. Heme serves as cofactor.

It localises to the endoplasmic reticulum membrane. Its subcellular location is the microsome membrane. The catalysed reaction is all-trans-retinoate + reduced [NADPH--hemoprotein reductase] + O2 = all-trans-5,6-epoxyretinoate + oxidized [NADPH--hemoprotein reductase] + H2O + H(+). The enzyme catalyses all-trans-retinoate + reduced [NADPH--hemoprotein reductase] + O2 = all-trans-4-hydroxyretinoate + oxidized [NADPH--hemoprotein reductase] + H2O + H(+). It catalyses the reaction (5S)-hydroperoxy-(6E,8Z,11Z,14Z)-eicosatetraenoate = 5-oxo-(6E,8Z,11Z,14Z)-eicosatetraenoate + H2O. It carries out the reaction (12S)-hydroperoxy-(5Z,8Z,10E,14Z)-eicosatetraenoate = 12-oxo-(5Z,8Z,10E,14Z)-eicosatetraenoate + H2O. The catalysed reaction is (15S)-hydroperoxy-(5Z,8Z,11Z,13E)-eicosatetraenoate = 15-oxo-(5Z,8Z,11Z,13E)-eicosatetraenoate + H2O. The enzyme catalyses prostaglandin H2 = thromboxane A2. It catalyses the reaction prostaglandin H2 = (12S)-hydroxy-(5Z,8E,10E)-heptadecatrienoate + malonaldehyde. It carries out the reaction (13S)-hydroperoxy-(9Z,11E)-octadecadienoate = 13-oxo-(9Z,11E)-octadecadienoate + H2O. Its pathway is lipid metabolism; fatty acid metabolism. A cytochrome P450 monooxygenase involved in the metabolism of retinoids and eicosanoids. In epidermis, may contribute to the oxidative metabolism of all-trans-retinoic acid. For this activity, uses molecular oxygen inserting one oxygen atom into a substrate, and reducing the second into a water molecule, with two electrons provided by NADPH via cytochrome P450 reductase (NADPH--hemoprotein reductase). Additionally, displays peroxidase and isomerase activities toward various oxygenated eicosanoids such as prostaglandin H2 (PGH2) and hydroperoxyeicosatetraenoates (HPETEs). Independently of cytochrome P450 reductase, NADPH, and O2, catalyzes the breakdown of PGH2 to hydroxyheptadecatrienoic acid (HHT) and malondialdehyde (MDA), which is known to act as a mediator of DNA damage. This chain is Cytochrome P450 2S1 (Cyp2s1), found in Mus musculus (Mouse).